The following is an 807-amino-acid chain: Glycerol-3-phosphate acyltransferase (807 aa).

The short motif at 308 to 313 (CHRSHM) is the HXXXXD motif element.

Belongs to the GPAT/DAPAT family.

It localises to the cell inner membrane. It catalyses the reaction sn-glycerol 3-phosphate + an acyl-CoA = a 1-acyl-sn-glycero-3-phosphate + CoA. The protein operates within phospholipid metabolism; CDP-diacylglycerol biosynthesis; CDP-diacylglycerol from sn-glycerol 3-phosphate: step 1/3. This chain is Glycerol-3-phosphate acyltransferase, found in Shewanella frigidimarina (strain NCIMB 400).